Here is a 435-residue protein sequence, read N- to C-terminus: tRNA modification GTPase MnmE (435 aa).

(6S)-5-formyl-5,6,7,8-tetrahydrofolate-binding residues include Arg-20, Glu-77, and Lys-117. In terms of domain architecture, TrmE-type G spans 214-359 (GFKIVIVGAP…FMKELESFCL (146 aa)). GTP is bound by residues 224–229 (NSGKSS), 243–249 (TEEAGTT), and 268–271 (DTAG). The Mg(2+) site is built by Ser-228 and Thr-249. Lys-435 serves as a coordination point for (6S)-5-formyl-5,6,7,8-tetrahydrofolate.

This sequence belongs to the TRAFAC class TrmE-Era-EngA-EngB-Septin-like GTPase superfamily. TrmE GTPase family. As to quaternary structure, homodimer. Heterotetramer of two MnmE and two MnmG subunits. The cofactor is K(+).

It localises to the cytoplasm. Exhibits a very high intrinsic GTPase hydrolysis rate. Involved in the addition of a carboxymethylaminomethyl (cmnm) group at the wobble position (U34) of certain tRNAs, forming tRNA-cmnm(5)s(2)U34. This is tRNA modification GTPase MnmE from Bartonella henselae (strain ATCC 49882 / DSM 28221 / CCUG 30454 / Houston 1) (Rochalimaea henselae).